The sequence spans 1017 residues: Fanconi-associated nuclease 1 (1017 aa).

Over residues 1-10 (MMSEGKPPDK) the composition is skewed to basic and acidic residues. Residues 1-23 (MMSEGKPPDKKRPRRSLSISKNK) are disordered. Over residues 11-23 (KRPRRSLSISKNK) the composition is skewed to basic residues. The short motif at 14–22 (RRSLSISKN) is the D-box element. The segment at 41–69 (KLACPVCSKMVPRYDLNRHLDEMCANNDF) adopts a UBZ4-type zinc-finger fold. Zn(2+) contacts are provided by C44, C47, H59, and C64. Disordered stretches follow at residues 95 to 121 (EDVT…KREV) and 170 to 189 (IDKD…STVV). Over residues 179-189 (SSPQSSKSTVV) the composition is skewed to polar residues. S180 is modified (phosphoserine). Positions 212–214 (KEN) match the KEN box motif. Residues 671–696 (SRFVEILQRLHMYEEAVRELESLLSQ) are a coiled coil. 4 residues coordinate Mn(2+): E834, D960, E975, and V976. In terms of domain architecture, VRR-NUC spans 895–1007 (EESLRAWVAA…GAEVEVCHVV (113 aa)).

This sequence belongs to the FAN1 family. In terms of assembly, interacts with FANCD2 (when monoubiquitinated). Interacts with FANCI, MLH1, MLH3 and PMS2. Requires Mn(2+) as cofactor. The cofactor is Mg(2+). In terms of processing, ubiquitinated and degraded during mitotic exit by the APC/C-Cdh1 complex.

The protein resides in the nucleus. It catalyses the reaction Hydrolytically removes 5'-nucleotides successively from the 3'-hydroxy termini of 3'-hydroxy-terminated oligonucleotides.. Nuclease required for the repair of DNA interstrand cross-links (ICL) recruited at sites of DNA damage by monoubiquitinated FANCD2. Specifically involved in repair of ICL-induced DNA breaks by being required for efficient homologous recombination, probably in the resolution of homologous recombination intermediates. Not involved in DNA double-strand breaks resection. Acts as a 5'-3' exonuclease that anchors at a cut end of DNA and cleaves DNA successively at every third nucleotide, allowing to excise an ICL from one strand through flanking incisions. Probably keeps excising with 3'-flap annealing until it reaches and unhooks the ICL. Acts at sites that have a 5'-terminal phosphate anchor at a nick or a 1- or 2-nucleotide flap and is augmented by a 3' flap. Also has endonuclease activity toward 5'-flaps. This Homo sapiens (Human) protein is Fanconi-associated nuclease 1.